The sequence spans 207 residues: Carbonic anhydrase 2 (207 aa).

Cys51, Asp53, His104, and Cys107 together coordinate Zn(2+).

Belongs to the beta-class carbonic anhydrase family. Requires Zn(2+) as cofactor.

It catalyses the reaction hydrogencarbonate + H(+) = CO2 + H2O. In terms of biological role, catalyzes the reversible hydration of carbon dioxide to form bicarbonate. This chain is Carbonic anhydrase 2 (mtcA2), found in Mycobacterium tuberculosis (strain CDC 1551 / Oshkosh).